A 387-amino-acid chain; its full sequence is Phosphoglycerate kinase (387 aa).

Substrate contacts are provided by residues 21 to 23 (DLN), R36, 60 to 63 (HLGR), R114, and R147. ATP contacts are provided by residues K198, E313, and 339–342 (GGDT).

It belongs to the phosphoglycerate kinase family. Monomer.

Its subcellular location is the cytoplasm. It carries out the reaction (2R)-3-phosphoglycerate + ATP = (2R)-3-phospho-glyceroyl phosphate + ADP. The protein operates within carbohydrate degradation; glycolysis; pyruvate from D-glyceraldehyde 3-phosphate: step 2/5. In Baumannia cicadellinicola subsp. Homalodisca coagulata, this protein is Phosphoglycerate kinase.